Reading from the N-terminus, the 157-residue chain is DNA gyrase inhibitor (157 aa).

The protein belongs to the DNA gyrase inhibitor family. In terms of assembly, interacts with DNA gyrase.

Its subcellular location is the cytoplasm. Inhibits the supercoiling activity of DNA gyrase. Acts by inhibiting DNA gyrase at an early step, prior to (or at the step of) binding of DNA by the gyrase. It protects cells against toxins that target DNA gyrase, by inhibiting activity of these toxins and reducing the formation of lethal double-strand breaks in the cell. The chain is DNA gyrase inhibitor from Citrobacter rodentium (strain ICC168) (Citrobacter freundii biotype 4280).